The sequence spans 294 residues: uncharacterized protein (294 aa).

Residues T43 and Y104 each act as charge relay system in the active site. Residue Y130 is the Proton donor of the active site. Catalysis depends on K158, which acts as the Schiff-base intermediate with substrate.

Belongs to the DapA family. Homotetramer.

Its subcellular location is the cytoplasm. This is an uncharacterized protein from Pyrococcus abyssi (strain GE5 / Orsay).